Here is a 199-residue protein sequence, read N- to C-terminus: NAD(P)H dehydrogenase (quinone) (199 aa).

The Flavodoxin-like domain occupies 4–190 (VLVLYYSAYG…AGARYQGRMI (187 aa)). Residues 10-15 (SAYGHI) and 78-80 (TRF) contribute to the FMN site. Residue Y12 coordinates NAD(+). Substrate is bound at residue W98. Residues 113–119 (SSATQHG) and H134 contribute to the FMN site.

This sequence belongs to the WrbA family. The cofactor is FMN.

It catalyses the reaction a quinone + NADH + H(+) = a quinol + NAD(+). The catalysed reaction is a quinone + NADPH + H(+) = a quinol + NADP(+). The chain is NAD(P)H dehydrogenase (quinone) from Nitrobacter winogradskyi (strain ATCC 25391 / DSM 10237 / CIP 104748 / NCIMB 11846 / Nb-255).